A 287-amino-acid chain; its full sequence is MALGLLIAVPLLLQAAPPGAAHYEMLGTCRMICDPYSVAPAGGPAGAKAPPPGPSTAALEVMQDLSANPPPPFIQGPKGDPGRPGKPGPRGPPGEPGPPGPRGPPGEKGDSGRPGLPGLQLTTSAAGGVGVVSGGTGGGGDTEGEVTSALSAAFSGPKIAFYVGLKSPHEGYEVLKFDDVVTNLGNHYDPTTGKFSCQVRGIYFFTYHILMRGGDGTSMWADLCKNGQVRASAIAQDADQNYDYASNSVVLHLDSGDEVYVKLDGGKAHGGNNNKYSTFSGFLLYPD.

The first 21 residues, 1-21 (MALGLLIAVPLLLQAAPPGAA), serve as a signal peptide directing secretion. Positions 65–144 (LSANPPPPFI…GTGGGGDTEG (80 aa)) are disordered. The Collagen-like domain occupies 76-118 (GPKGDPGRPGKPGPRGPPGEPGPPGPRGPPGEKGDSGRPGLPG). Positions 84-104 (PGKPGPRGPPGEPGPPGPRGP) are enriched in pro residues. Positions 127–141 (GGVGVVSGGTGGGGD) are enriched in gly residues. Residues 154–287 (FSGPKIAFYV…TFSGFLLYPD (134 aa)) form the C1q domain.

In terms of assembly, forms homotrimers which can further assemble to form higher-order oligomeric complexes. Interacts with ADGRB3. May interact with ERFE. Forms heterooligomers with C1QL3 and C1QL4, when proteins are coexpressed; this interaction does not occur after secretion. Glycosylated, but not with N-linked glycans. As to expression, highest expression in eye, followed by placenta and brain, intermediate expression in adipose tissue and lowest expression in lymph node and testis.

The protein localises to the secreted. May regulate the number of excitatory synapses that are formed on hippocampus neurons. Has no effect on inhibitory synapses. This Mus musculus (Mouse) protein is Complement C1q-like protein 2 (C1ql2).